A 26-amino-acid polypeptide reads, in one-letter code: uncharacterized protein (26 aa).

Post-translationally, phosphorylated by YfhK.

Functionally, probable member of a two-component regulatory system YfhA/YfhK. This is an uncharacterized protein from Klebsiella oxytoca.